Reading from the N-terminus, the 638-residue chain is Threonine--tRNA ligase (638 aa).

The TGS domain occupies 1 to 61 (MPLITLPDGN…DKDCSVKIFT (61 aa)). The catalytic stretch occupies residues 243–535 (DHRKLGKEMD…LIENYAGKFP (293 aa)). Positions 335, 386, and 512 each coordinate Zn(2+).

The protein belongs to the class-II aminoacyl-tRNA synthetase family. As to quaternary structure, homodimer. It depends on Zn(2+) as a cofactor.

It localises to the cytoplasm. It catalyses the reaction tRNA(Thr) + L-threonine + ATP = L-threonyl-tRNA(Thr) + AMP + diphosphate + H(+). Its function is as follows. Catalyzes the attachment of threonine to tRNA(Thr) in a two-step reaction: L-threonine is first activated by ATP to form Thr-AMP and then transferred to the acceptor end of tRNA(Thr). Also edits incorrectly charged L-seryl-tRNA(Thr). The polypeptide is Threonine--tRNA ligase (Pelagibacter ubique (strain HTCC1062)).